The chain runs to 241 residues: Fatty acid metabolism regulator protein (241 aa).

The region spanning 11–79 (QSPAALAEEY…HGKPTKVNNI (69 aa)) is the HTH gntR-type domain. The segment at residues 39–58 (ERDLADKIGVTRTTLREVLQ) is a DNA-binding region (H-T-H motif).

In terms of assembly, homodimer.

The protein resides in the cytoplasm. Multifunctional regulator of fatty acid metabolism. The chain is Fatty acid metabolism regulator protein from Haemophilus influenzae (strain ATCC 51907 / DSM 11121 / KW20 / Rd).